The primary structure comprises 396 residues: 1-deoxy-D-xylulose 5-phosphate reductoisomerase (396 aa).

Positions 10, 11, 12, 13, and 123 each coordinate NADPH. Residue K124 participates in 1-deoxy-D-xylulose 5-phosphate binding. Position 125 (E125) interacts with NADPH. D149 contacts Mn(2+). Positions 150, 151, 185, and 208 each coordinate 1-deoxy-D-xylulose 5-phosphate. Residue E151 coordinates Mn(2+). G214 provides a ligand contact to NADPH. Residues S221, N226, K227, and E230 each contribute to the 1-deoxy-D-xylulose 5-phosphate site. Residue E230 participates in Mn(2+) binding.

Belongs to the DXR family. The cofactor is Mg(2+). Requires Mn(2+) as cofactor.

The catalysed reaction is 2-C-methyl-D-erythritol 4-phosphate + NADP(+) = 1-deoxy-D-xylulose 5-phosphate + NADPH + H(+). The protein operates within isoprenoid biosynthesis; isopentenyl diphosphate biosynthesis via DXP pathway; isopentenyl diphosphate from 1-deoxy-D-xylulose 5-phosphate: step 1/6. Catalyzes the NADPH-dependent rearrangement and reduction of 1-deoxy-D-xylulose-5-phosphate (DXP) to 2-C-methyl-D-erythritol 4-phosphate (MEP). This is 1-deoxy-D-xylulose 5-phosphate reductoisomerase from Shewanella sp. (strain MR-4).